A 758-amino-acid chain; its full sequence is MGRIQIVYSPDENVSGRTNRPGKEVVDPRTGRIIKVKRETPDDYLNVLKPIKGPKRMEFNPYLPKTLTPKGYAKFKLMMNVASKQYETLVKRLKTERTLWEDPDFPANDKAIGNLPDFRERIEWKRPHEINPNAKFFAGGASRFDIEQGALGDCWLLAVVASISGYPQLFDQVVPKDQELKGPEYVGVVRFRFWRFGHWVEVLIDDRLPVRQGRNTLVFMHSNDPTEFWSALLEKAYAKLNGCYAHLSGGSQSEAMEDLTGGICLSLELNQKERPSDLIDQLKIYAQRCCLMGCSIDSSVMEQKMDNGLIGSHAYSLTGVYPVNYRGRTQWLMRLRNPWGDSHEWKGAWCDGSPQWREISEQEKKNINLSFTADGEFWMSYEDFVTCFSRVEVCHLGLESLEYNQNFHGKRRLDEAIFSGQWQRNVNAGGCINNRTTYWTSPQFRITVEDPDPDDDDNKCSVLIGLMQTDIRKKVGADFQPIGFMVYNAPDDLNTLLSRAQLLTRSPIAKSQFINTREVTAQFRVPPGSYVVIPSTFDPNIEVNFILRVFSQTSITEQELDEDNTNQGLPDDVIEALKLEDTLLDEDQEIEQKFLAIRDPKTNAINAVKLGELLNNSTLQDIPNFQGFNKELCRSMVASVDNNLTGHVELNEFMDLWIQAKGWKHIFIKHDVDQSGYFSAYEFREALNDAGYHVSNRLINAIINRYQDPGTDKISFEDFMLCMVRLKTAFETIEAHPKNIEGTSLFSAEDYLRFSVYI.

The Calpain catalytic domain maps to 99–397 (LWEDPDFPAN…FSRVEVCHLG (299 aa)). Active-site residues include C154, H313, and N337. The domain III stretch occupies residues 398–562 (LESLEYNQNF…TSITEQELDE (165 aa)). The linker stretch occupies residues 563–582 (DNTNQGLPDDVIEALKLEDT). A domain IV region spans residues 583 to 757 (LLDEDQEIEQ…AEDYLRFSVY (175 aa)). Positions 641, 643, 645, 647, 652, 671, 673, 675, 677, and 682 each coordinate Ca(2+). 2 consecutive EF-hand domains span residues 658–693 (IQAKGWKHIFIKHDVDQSGYFSAYEFREALNDAGYH) and 694–729 (VSNRLINAIINRYQDPGTDKISFEDFMLCMVRLKTA).

It belongs to the peptidase C2 family.

With respect to regulation, activated by free cytoplasmic calcium. In terms of biological role, calpains are calcium-activated non-lysosomal thiol-proteases. The protein is Calpain of Schistosoma mansoni (Blood fluke).